Here is a 458-residue protein sequence, read N- to C-terminus: MATRKAVRTAFEKCLLAVEPRSIVRNAISLNPSLLKIADYNYSLSNSTKIVVIAFGKASILMAKGARDQLKSSLLQKTIVIAPEQQKGIENELENDTEILYGARDNLPDEKSVFATRKVISEIRDFDSESTIFLFLISGGGSALLTSPSAPLDLAEKLETIRIMQAHGATIQELNTIRQNLSDVKGGKLLREIKKGCSIALIISDVIGNPVELIASGPTVIPAHQQDKFIISNILESLKINKLELPVNVKNVLENHEKEQLPENTSRFQNFIISSNNFALRAAAEYLTSSGYNSTIVTSSLSGNAAEIGKKFAEIITEKSITSSHLLKNSNLTIENYPIALLFGGETTVHLSENPGKGGRNQEMVLSCLDALKTRVPAHNFTFLSAGTDGQDGPTDAAGAIISNEDLPLNSLLNSSEFLQNSDSYNFWRQFKGGANHILTGPSGTNVMDIQILLLDQL.

The protein belongs to the glycerate kinase type-2 family.

This is an uncharacterized protein from Caenorhabditis elegans.